Reading from the N-terminus, the 894-residue chain is Glutamate receptor 3 (894 aa).

Positions 1-28 (MARQKKMGQSVLRAVFFLVLGLLGHSHG) are cleaved as a signal peptide. Residues 29–552 (GFPNTISIGG…GVFSFLDPLA (524 aa)) lie on the Extracellular side of the membrane. N-linked (GlcNAc...) asparagine glycosylation is found at asparagine 63, asparagine 266, asparagine 380, asparagine 415, and asparagine 422. Cysteine 91 and cysteine 340 are disulfide-bonded. L-glutamate contacts are provided by proline 508, threonine 510, and arginine 515. The chain crosses the membrane as a helical span at residues 553–573 (YEIWMCIVFAYIGVSVVLFLV). At 574-602 (SRFSPYEWHLEDNNEEPRDPQSPPDPPNE) the chain is on the cytoplasmic side. The segment at residues 603-618 (FGIFNSLWFSLGAFMQ) is an intramembrane region (helical; Pore-forming). An intramembrane segment occupies 619–621 (QGC). Cysteine 621 is lipidated: S-palmitoyl cysteine. Residues 622–627 (DISPRS) lie on the Cytoplasmic side of the membrane. A helical transmembrane segment spans residues 628-648 (LSGRIVGGVWWFFTLIIISSY). Over 649–823 (TANLAAFLTV…DKTSALSLSN (175 aa)) the chain is Extracellular. L-glutamate-binding residues include serine 686, threonine 687, and glutamate 737. Residues cysteine 750 and cysteine 805 are joined by a disulfide bond. Residues 824–844 (VAGVFYILVGGLGLAMMVALI) traverse the membrane as a helical segment. Over 845 to 894 (EFCYKSRAESKRMKLTKNTQNFKPAPATNTQNYATYREGYNVYGTESVKI) the chain is Cytoplasmic. Cysteine 847 carries the S-palmitoyl cysteine lipid modification. A phosphotyrosine mark is found at tyrosine 877 and tyrosine 887.

This sequence belongs to the glutamate-gated ion channel (TC 1.A.10.1) family. GRIA3 subfamily. Homotetramer or heterotetramer of pore-forming glutamate receptor subunits. Tetramers may be formed by the dimerization of dimers. Interacts with PICK1, GRIP1 and GRIP2. Found in a complex with GRIA1, GRIA2, GRIA4, CNIH2, CNIH3, CACNG2, CACNG3, CACNG4, CACNG5, CACNG7 and CACNG8. Interacts with CACNG5. Found in a complex with GRIA1, GRIA2, GRIA4, DLG4, CACNG8 and CNIH2.

The protein resides in the cell membrane. It localises to the postsynaptic cell membrane. The protein localises to the postsynaptic density membrane. It carries out the reaction Ca(2+)(in) = Ca(2+)(out). Functionally, ionotropic glutamate receptor that functions as a ligand-gated cation channel, gated by L-glutamate and glutamatergic agonists such as alpha-amino-3-hydroxy-5-methyl-4-isoxazolepropionic acid (AMPA), quisqualic acid, and kainic acid. L-glutamate acts as an excitatory neurotransmitter at many synapses in the central nervous system and plays an important role in fast excitatory synaptic transmission by inducing long-term potentiation. Binding of the excitatory neurotransmitter L-glutamate induces a conformation change, leading to the opening of the cation channel, and thereby converts the chemical signal to an electrical impulse upon entry of calcium. The receptor then desensitizes rapidly and enters a transient inactive state, characterized by the presence of bound agonist. In the presence of CACNG8, shows resensitization which is characterized by a delayed accumulation of current flux upon continued application of glutamate. The chain is Glutamate receptor 3 from Homo sapiens (Human).